Consider the following 307-residue polypeptide: UDP-3-O-acyl-N-acetylglucosamine deacetylase (307 aa).

Residues His-78, His-235, and Asp-239 each coordinate Zn(2+). His-262 acts as the Proton donor in catalysis.

Belongs to the LpxC family. Zn(2+) is required as a cofactor.

The catalysed reaction is a UDP-3-O-[(3R)-3-hydroxyacyl]-N-acetyl-alpha-D-glucosamine + H2O = a UDP-3-O-[(3R)-3-hydroxyacyl]-alpha-D-glucosamine + acetate. Its pathway is glycolipid biosynthesis; lipid IV(A) biosynthesis; lipid IV(A) from (3R)-3-hydroxytetradecanoyl-[acyl-carrier-protein] and UDP-N-acetyl-alpha-D-glucosamine: step 2/6. Its function is as follows. Catalyzes the hydrolysis of UDP-3-O-myristoyl-N-acetylglucosamine to form UDP-3-O-myristoylglucosamine and acetate, the committed step in lipid A biosynthesis. This is UDP-3-O-acyl-N-acetylglucosamine deacetylase from Geotalea uraniireducens (strain Rf4) (Geobacter uraniireducens).